A 493-amino-acid chain; its full sequence is Phenmedipham hydrolase (493 aa).

The active-site Acyl-ester intermediate is the Ser188. Active-site charge relay system residues include Glu307 and His402.

Belongs to the type-B carboxylesterase/lipase family. In terms of assembly, monomer.

In terms of biological role, may degrade the phenylcarbamate herbicides phenmedipham and desmedipham cometabolically by hydrolyzing their central carbamate linkages. Conveys resistance to the herbicide phenmedipham. In Pseudarthrobacter oxydans (Arthrobacter oxydans), this protein is Phenmedipham hydrolase (pcd).